The chain runs to 499 residues: Glycerol kinase (499 aa).

Thr-15 is an ADP binding site. Residues Thr-15, Thr-16, and Ser-17 each contribute to the ATP site. Residue Thr-15 coordinates sn-glycerol 3-phosphate. Arg-19 provides a ligand contact to ADP. Sn-glycerol 3-phosphate-binding residues include Arg-85, Glu-86, Tyr-137, and Asp-246. Positions 85, 86, 137, 246, and 247 each coordinate glycerol. The ADP site is built by Thr-268 and Gly-311. ATP contacts are provided by Thr-268, Gly-311, Gln-315, and Gly-412. ADP contacts are provided by Gly-412 and Asn-416.

It belongs to the FGGY kinase family.

The catalysed reaction is glycerol + ATP = sn-glycerol 3-phosphate + ADP + H(+). The protein operates within polyol metabolism; glycerol degradation via glycerol kinase pathway; sn-glycerol 3-phosphate from glycerol: step 1/1. Its activity is regulated as follows. Inhibited by fructose 1,6-bisphosphate (FBP). Functionally, key enzyme in the regulation of glycerol uptake and metabolism. Catalyzes the phosphorylation of glycerol to yield sn-glycerol 3-phosphate. This Parabacteroides distasonis (strain ATCC 8503 / DSM 20701 / CIP 104284 / JCM 5825 / NCTC 11152) protein is Glycerol kinase.